Reading from the N-terminus, the 374-residue chain is MKISVSKNDLENTLRYLQAFLDKKDASSIASHIHLEVIKEKLFLKASDSDIGLKSYISTQSTDKEGVGTINGKKFLDIISCLKDSNIVLETKDDSLVIKQNKSSFKLPMFDADEFPEFPVIDPKVSLEINAPFLVDAFKKIAPVIEQTSHKRELAGVLMQFNQKHQTLSVVGTDTKRLSYTQLEKISIHSTEEDISCILPKRALLEILKLFYENFSFKSDGMLAVVENETHAFFTKLIDGNYPDYQKILPKEYTSSFTLGKEEFKEGIKLCSSLSSTIKLTLEKNNALFESLDSEHSETAKTSVEIEKGLDIEKAFHLGVNAKFFLEALNALGTTQFVLKCNEPSSPFLIQEPLDEKQSHLNAKISTLMMPITL.

Belongs to the beta sliding clamp family. Forms a ring-shaped head-to-tail homodimer around DNA which binds and tethers DNA polymerases and other proteins to the DNA. The DNA replisome complex has a single clamp-loading complex (3 tau and 1 each of delta, delta', psi and chi subunits) which binds 3 Pol III cores (1 core on the leading strand and 2 on the lagging strand) each with a beta sliding clamp dimer. Additional proteins in the replisome are other copies of gamma, psi and chi, Ssb, DNA helicase and RNA primase.

It is found in the cytoplasm. Functionally, confers DNA tethering and processivity to DNA polymerases and other proteins. Acts as a clamp, forming a ring around DNA (a reaction catalyzed by the clamp-loading complex) which diffuses in an ATP-independent manner freely and bidirectionally along dsDNA. Initially characterized for its ability to contact the catalytic subunit of DNA polymerase III (Pol III), a complex, multichain enzyme responsible for most of the replicative synthesis in bacteria; Pol III exhibits 3'-5' exonuclease proofreading activity. The beta chain is required for initiation of replication as well as for processivity of DNA replication. This chain is Beta sliding clamp (dnaN), found in Helicobacter pylori (strain J99 / ATCC 700824) (Campylobacter pylori J99).